Consider the following 343-residue polypeptide: Protein rax1 (343 aa).

At 1-235 (MASAPRVSEV…NLNPLTCTGR (235 aa)) the chain is on the cytoplasmic side. The 120-residue stretch at 109–228 (ELSNEQTINS…LNHKFKHNLN (120 aa)) folds into the RGS domain. A helical membrane pass occupies residues 236 to 256 (FIIGYVSTFAAYWLGFCGIFL). The Extracellular segment spans residues 257–263 (DYSRRKR). A helical transmembrane segment spans residues 264–284 (VWTLLPFAFGFYNLICTWSKH). Topologically, residues 285–317 (DPVLALLGYSEVKPFHYEKVLQPSIRLSLNRRA) are cytoplasmic. Residues 318-338 (IFVLSIIVLIVGANTAIFSCV) form a helical membrane-spanning segment. The Extracellular segment spans residues 339 to 343 (PSIRL).

It is found in the cell membrane. The protein localises to the endoplasmic reticulum membrane. Functionally, may be involved in cell polarization and division. This chain is Protein rax1 (rax1), found in Schizosaccharomyces pombe (strain 972 / ATCC 24843) (Fission yeast).